The sequence spans 179 residues: Large ribosomal subunit protein uL5 (179 aa).

Belongs to the universal ribosomal protein uL5 family. In terms of assembly, part of the 50S ribosomal subunit; part of the 5S rRNA/L5/L18/L25 subcomplex. Contacts the 5S rRNA and the P site tRNA. Forms a bridge to the 30S subunit in the 70S ribosome.

This is one of the proteins that bind and probably mediate the attachment of the 5S RNA into the large ribosomal subunit, where it forms part of the central protuberance. In the 70S ribosome it contacts protein S13 of the 30S subunit (bridge B1b), connecting the 2 subunits; this bridge is implicated in subunit movement. Contacts the P site tRNA; the 5S rRNA and some of its associated proteins might help stabilize positioning of ribosome-bound tRNAs. This is Large ribosomal subunit protein uL5 from Dehalococcoides mccartyi (strain ATCC BAA-2266 / KCTC 15142 / 195) (Dehalococcoides ethenogenes (strain 195)).